We begin with the raw amino-acid sequence, 284 residues long: NADH-cytochrome b5 reductase 1 (284 aa).

Residues 7 to 27 (KLVVVIVIVVVPLLFKFIIGP) traverse the membrane as a helical segment. In terms of domain architecture, FAD-binding FR-type spans 38–142 (NDFQSFPLVE…KGPRGNYHYE (105 aa)). FAD-binding positions include 122 to 137 (GELK…GPRG) and 148 to 180 (HLGM…KVSL).

It belongs to the flavoprotein pyridine nucleotide cytochrome reductase family. As to quaternary structure, monomer. Component of the 2-(3-amino-3-carboxypropyl)histidine synthase complex composed of DPH1, DPH2, KTI11/DPH3 and a NADH-dependent reductase, predominantly CBR1. Interacts with KTI11/DPH3. Interacts with STE20. It depends on FAD as a cofactor.

It is found in the mitochondrion outer membrane. It carries out the reaction 2 Fe(III)-[cytochrome b5] + NADH = 2 Fe(II)-[cytochrome b5] + NAD(+) + H(+). It catalyses the reaction 2 Fe(3+)-[Dph3] + NADH = 2 Fe(2+)-[Dph3] + NAD(+) + H(+). It participates in protein modification; peptidyl-diphthamide biosynthesis. With respect to regulation, competitively inhibited by NAD(+). Inhibited by mercurials such as p-chloromercuribenzoate (PCMB) and HgCl(2). Enzymatic activity increases under anaerobic conditions. Functionally, NADH-dependent reductase for KTI11/DPH3 and cytochrome b5. Required for the first step of diphthamide biosynthesis, a post-translational modification of histidine which occurs in elongation factor 2. DPH1 and DPH2 transfer a 3-amino-3-carboxypropyl (ACP) group from S-adenosyl-L-methionine (SAM) to a histidine residue, the reaction is assisted by a reduction system comprising KTI11/DPH3 and a NADH-dependent reductase, predominantly CBR1. By reducing KTI11/DPH3, also involved in the formation of the tRNA wobble base modification mcm5s 2U (5-methoxycarbonylmethyl-2-thiouridine), mediated by the elongator complex. The cytochrome b5/NADH cytochrome b5 reductase electron transfer system supports the catalytic activity of several sterol biosynthetic enzymes. Plays a role in bud morphology. The protein is NADH-cytochrome b5 reductase 1 (CBR1) of Saccharomyces cerevisiae (strain ATCC 204508 / S288c) (Baker's yeast).